The chain runs to 364 residues: MPQTVILPGPAPWGFRLSGGIDFNQPLVITRITPGSKAAAANLCPGDVILAIDGFGTESMTHADAQDRIKAAAHQLCLKIDRGETHLWSPQVSEDGKAHPFKINLESEPQDGNYFEHKHNIRPKPFVIPGRSSGCSTPSGIDCGSGRSTPSSVSTVSTICPGDLKVAAKLAPNIPLEMELPGVKIVHAQFNTPMQLYSDDNIMETLQGQVSTALGETPLMSEPTASVPPESDVYRMLHDNRNEPTQPRQSGSFRVLQGMVDDGSDDRPAGTRSVRAPVTKVHGGSGGAQRMPLCDKCGSGIVGAVVKARDKYRHPECFVCADCNLNLKQKGYFFIEGELYCETHARARTKPPEGYDTVTLYPKA.

One can recognise a PDZ domain in the interval 1–84; that stretch reads MPQTVILPGP…QLCLKIDRGE (84 aa). Phosphoserine occurs at positions 18, 93, and 264. The LIM zinc-binding domain occupies 292 to 351; it reads PLCDKCGSGIVGAVVKARDKYRHPECFVCADCNLNLKQKGYFFIEGELYCETHARARTKP.

As to quaternary structure, interacts with ACTN2. Forms a heterodimer with PDLIM4 (via LIM domain). As to expression, isoform 1 is highly expressed in differentiated skeletal muscle. Isoform 2 is heart-specific.

Its subcellular location is the cytoplasm. It is found in the myofibril. It localises to the sarcomere. The protein localises to the z line. May play a role in the organization of actin filament arrays within muscle cells. The protein is PDZ and LIM domain protein 3 (PDLIM3) of Homo sapiens (Human).